A 268-amino-acid chain; its full sequence is Minor capsid protein VP2 (268 aa).

Over residues 132 to 144 the composition is skewed to polar residues; the sequence is STPQSLGALTGRT. The interval 132–199 is disordered; that stretch reads STPQSLGALT…SLSSAARTRS (68 aa). Positions 145–163 are enriched in low complexity; sequence NSRVSAPARSSPSALSNAP. Over residues 164-178 the composition is skewed to polar residues; the sequence is TATSLHSNQTVSTRL. Residues 179–195 are compositionally biased toward low complexity; that stretch reads GSSAGSGTGVSSLSSAA.

This sequence belongs to the norovirus VP2 family. Homooligomer. The portal-like structure consists in 12 copies of VP2. Interacts with capsid protein VP1.

It localises to the virion. The protein localises to the host cytoplasm. Functionally, minor structural protein that forms a portal-like structure at a unique three-fold axis of symmetry, following binding to the host receptor. The channel formed by VP2 may allow the delivery of the viral genome through the host endosomal membrane. The polypeptide is Minor capsid protein VP2 (Lordsdale virus (strain GII/Human/United Kingdom/Lordsdale/1993) (Human enteric calicivirus)).